We begin with the raw amino-acid sequence, 606 residues long: Endonuclease 8-like 3 (606 aa).

Val-2 acts as the Schiff-base intermediate with DNA; via amino nitrogen in catalysis. Positions 31-51 (ALQGLGGPGSPPAAPGPMGTS) are disordered. DNA is bound by residues Asn-194 and Arg-273. The FPG-type zinc-finger motif lies at 249–283 (KVYKRPNCGQCCCKITVCRLGENNRMTYFCPHCQK). The RanBP2-type zinc finger occupies 319–348 (SEEQWTCEVCTLINKLSSKTCDACLTSRPA). The residue at position 451 (Ser-451) is a Phosphoserine. Positions 508, 511, 534, 542, 555, 557, 580, and 588 each coordinate Zn(2+). 2 GRF-type zinc fingers span residues 508-551 (CSKH…ADLS) and 555-597 (CNHG…AQNG).

The protein belongs to the FPG family.

The protein localises to the nucleus. Its subcellular location is the chromosome. The enzyme catalyses 2'-deoxyribonucleotide-(2'-deoxyribose 5'-phosphate)-2'-deoxyribonucleotide-DNA = a 3'-end 2'-deoxyribonucleotide-(2,3-dehydro-2,3-deoxyribose 5'-phosphate)-DNA + a 5'-end 5'-phospho-2'-deoxyribonucleoside-DNA + H(+). Its function is as follows. DNA glycosylase which prefers single-stranded DNA (ssDNA), or partially ssDNA structures such as bubble and fork structures, to double-stranded DNA (dsDNA). Mediates interstrand cross-link repair in response to replication stress: acts by mediating DNA glycosylase activity, cleaving one of the two N-glycosyl bonds comprising the interstrand cross-link, which avoids the formation of a double-strand break but generates an abasic site that is bypassed by translesion synthesis polymerases. In vitro, displays strong glycosylase activity towards the hydantoin lesions spiroiminodihydantoin (Sp) and guanidinohydantoin (Gh) in both ssDNA and dsDNA; also recognizes FapyA, FapyG, 5-OHU, 5-OHC, 5-OHMH, Tg and 8-oxoA lesions in ssDNA. No activity on 8-oxoG detected. Also shows weak DNA-(apurinic or apyrimidinic site) lyase activity. In vivo, appears to be the primary enzyme involved in removing Sp and Gh from ssDNA in neonatal tissues. The protein is Endonuclease 8-like 3 (NEIL3) of Bos taurus (Bovine).